The chain runs to 179 residues: Adenine phosphoribosyltransferase (179 aa).

It belongs to the purine/pyrimidine phosphoribosyltransferase family. Homodimer.

The protein localises to the cytoplasm. It catalyses the reaction AMP + diphosphate = 5-phospho-alpha-D-ribose 1-diphosphate + adenine. The protein operates within purine metabolism; AMP biosynthesis via salvage pathway; AMP from adenine: step 1/1. Functionally, catalyzes a salvage reaction resulting in the formation of AMP, that is energically less costly than de novo synthesis. This Haemophilus ducreyi (strain 35000HP / ATCC 700724) protein is Adenine phosphoribosyltransferase.